Reading from the N-terminus, the 499-residue chain is Sensor histidine kinase VxrA (499 aa).

The Cytoplasmic portion of the chain corresponds to 1–12 (MRYSFCMLEKTN). The chain crosses the membrane as a helical span at residues 13 to 31 (IPLIRALNLTLVSLCFAML). Residues 32–257 (PNPVHADSLP…ICWDVEDHSD (226 aa)) are Periplasmic-facing. Intrachain disulfides connect C101/C122 and C241/C249. A helical transmembrane segment spans residues 258–280 (LLRTSMIILVIANIFLVLGWSGY). The Cytoplasmic segment spans residues 281–499 (RWNSKRQEMR…IPCETDTASR (219 aa)). Positions 298 to 494 (ILTHELRTPI…TFILEIPCET (197 aa)) constitute a Histidine kinase domain. A Phosphohistidine; by autocatalysis modification is found at H301.

Homodimer. In terms of processing, autophosphorylated. Contains two disulfide bonds that may play a role in the stability of the protein. However, the disulfide bonds are not absolutely essential, as some activity and growth are detected in the absence of each disulfide bond.

It localises to the cell inner membrane. The catalysed reaction is ATP + protein L-histidine = ADP + protein N-phospho-L-histidine.. Functionally, member of the two-component regulatory system VxrB/VxrA involved in the regulation of diverses processes, including virulence, the type VI secretion system (T6SS) and biofilm formation. Functions as a sensor protein kinase which is autophosphorylated at a histidine residue and transfers its phosphate group to the conserved aspartic acid residue in the regulatory domain of VxrB. Is critical for colonization in the infant mouse model. Contributes to the resistance to beta-lactam treatment. This is Sensor histidine kinase VxrA from Vibrio cholerae serotype O1 (strain ATCC 39315 / El Tor Inaba N16961).